A 122-amino-acid polypeptide reads, in one-letter code: Large ribosomal subunit protein uL14 (122 aa).

This sequence belongs to the universal ribosomal protein uL14 family. In terms of assembly, part of the 50S ribosomal subunit. Forms a cluster with proteins L3 and L19. In the 70S ribosome, L14 and L19 interact and together make contacts with the 16S rRNA in bridges B5 and B8.

Binds to 23S rRNA. Forms part of two intersubunit bridges in the 70S ribosome. In Stenotrophomonas maltophilia (strain R551-3), this protein is Large ribosomal subunit protein uL14.